The chain runs to 309 residues: 4-hydroxy-3-methylbut-2-enyl diphosphate reductase (309 aa).

Residue C13 coordinates [4Fe-4S] cluster. Residues H42 and H75 each coordinate (2E)-4-hydroxy-3-methylbut-2-enyl diphosphate. Residues H42 and H75 each coordinate dimethylallyl diphosphate. Residues H42 and H75 each coordinate isopentenyl diphosphate. Position 97 (C97) interacts with [4Fe-4S] cluster. H125 is a (2E)-4-hydroxy-3-methylbut-2-enyl diphosphate binding site. H125 lines the dimethylallyl diphosphate pocket. H125 serves as a coordination point for isopentenyl diphosphate. E127 functions as the Proton donor in the catalytic mechanism. T165 is a binding site for (2E)-4-hydroxy-3-methylbut-2-enyl diphosphate. C195 lines the [4Fe-4S] cluster pocket. Positions 223, 224, 225, and 267 each coordinate (2E)-4-hydroxy-3-methylbut-2-enyl diphosphate. Dimethylallyl diphosphate contacts are provided by S223, S224, N225, and S267. Positions 223, 224, 225, and 267 each coordinate isopentenyl diphosphate.

The protein belongs to the IspH family. Requires [4Fe-4S] cluster as cofactor.

The enzyme catalyses isopentenyl diphosphate + 2 oxidized [2Fe-2S]-[ferredoxin] + H2O = (2E)-4-hydroxy-3-methylbut-2-enyl diphosphate + 2 reduced [2Fe-2S]-[ferredoxin] + 2 H(+). The catalysed reaction is dimethylallyl diphosphate + 2 oxidized [2Fe-2S]-[ferredoxin] + H2O = (2E)-4-hydroxy-3-methylbut-2-enyl diphosphate + 2 reduced [2Fe-2S]-[ferredoxin] + 2 H(+). The protein operates within isoprenoid biosynthesis; dimethylallyl diphosphate biosynthesis; dimethylallyl diphosphate from (2E)-4-hydroxy-3-methylbutenyl diphosphate: step 1/1. Its pathway is isoprenoid biosynthesis; isopentenyl diphosphate biosynthesis via DXP pathway; isopentenyl diphosphate from 1-deoxy-D-xylulose 5-phosphate: step 6/6. Its function is as follows. Catalyzes the conversion of 1-hydroxy-2-methyl-2-(E)-butenyl 4-diphosphate (HMBPP) into a mixture of isopentenyl diphosphate (IPP) and dimethylallyl diphosphate (DMAPP). Acts in the terminal step of the DOXP/MEP pathway for isoprenoid precursor biosynthesis. In Chlamydia caviae (strain ATCC VR-813 / DSM 19441 / 03DC25 / GPIC) (Chlamydophila caviae), this protein is 4-hydroxy-3-methylbut-2-enyl diphosphate reductase.